Here is a 762-residue protein sequence, read N- to C-terminus: Polyadenylate-binding protein, cytoplasmic and nuclear (762 aa).

Positions 39–58 are disordered; that stretch reads TGEEIDTAGPTPSSAAPHPQ. Residues 48 to 58 are compositionally biased toward low complexity; sequence PTPSSAAPHPQ. 4 consecutive RRM domains span residues 61–139, 149–226, 242–320, and 346–470; these read ASLY…WSQR, GNVF…HHIP, TNIY…RAQK, and VNLY…LAQR. 3 disordered regions span residues 376-429, 596-663, and 740-762; these read KVMR…KSKL, SALA…AGAP, and VRQQ…EEKA. Residues 389-425 show a composition bias toward basic and acidic residues; the sequence is GESKEGEESEKNKENKPEEKEGDDSKPEEKEGEDSKS. Positions 600–612 are enriched in gly residues; the sequence is GGRGGPAGRGPMQ. Residues 645–663 show a composition bias toward low complexity; the sequence is AAGRAPAGAPAGARGAGAP. One can recognise a PABC domain in the interval 664–741; that stretch reads EGLQGQLAAV…ALAVYDDYVR (78 aa). Positions 753–762 are enriched in basic and acidic residues; that stretch reads SKEEKTEEKA.

Belongs to the polyadenylate-binding protein type-1 family.

The protein localises to the cytoplasm. It localises to the nucleus. In terms of biological role, binds the poly(A) tail of mRNA. Appears to be an important mediator of the multiple roles of the poly(A) tail in mRNA biogenesis, stability and translation. In the nucleus, involved in both mRNA cleavage and polyadenylation. Is also required for efficient mRNA export to the cytoplasm. Acts in concert with a poly(A)-specific nuclease (PAN) to affect poly(A) tail shortening, which may occur concomitantly with either nucleocytoplasmic mRNA transport or translational initiation. In the cytoplasm, stimulates translation initiation and regulates mRNA decay through translation termination-coupled poly(A) shortening, probably mediated by PAN. The chain is Polyadenylate-binding protein, cytoplasmic and nuclear (PAB1) from Pyricularia oryzae (strain 70-15 / ATCC MYA-4617 / FGSC 8958) (Rice blast fungus).